Reading from the N-terminus, the 438-residue chain is DNA primase DnaG (438 aa).

A Toprim domain is found at 169–243; that stretch reads DSIIVVEGRA…DIDYVARAPY (75 aa). 3 residues coordinate Mg(2+): E175, D217, and D219.

This sequence belongs to the archaeal DnaG primase family. Forms a ternary complex with MCM helicase and DNA. Requires Mg(2+) as cofactor.

The enzyme catalyses ssDNA + n NTP = ssDNA/pppN(pN)n-1 hybrid + (n-1) diphosphate.. In terms of biological role, RNA polymerase that catalyzes the synthesis of short RNA molecules used as primers for DNA polymerase during DNA replication. The sequence is that of DNA primase DnaG from Methanococcus maripaludis (strain C6 / ATCC BAA-1332).